A 117-amino-acid chain; its full sequence is Large ribosomal subunit protein uL18 (117 aa).

This sequence belongs to the universal ribosomal protein uL18 family. In terms of assembly, part of the 50S ribosomal subunit; part of the 5S rRNA/L5/L18/L25 subcomplex. Contacts the 5S and 23S rRNAs.

In terms of biological role, this is one of the proteins that bind and probably mediate the attachment of the 5S RNA into the large ribosomal subunit, where it forms part of the central protuberance. The polypeptide is Large ribosomal subunit protein uL18 (Aliivibrio salmonicida (strain LFI1238) (Vibrio salmonicida (strain LFI1238))).